Here is a 142-residue protein sequence, read N- to C-terminus: Large ribosomal subunit protein uL13 (142 aa).

This sequence belongs to the universal ribosomal protein uL13 family. Part of the 50S ribosomal subunit.

Functionally, this protein is one of the early assembly proteins of the 50S ribosomal subunit, although it is not seen to bind rRNA by itself. It is important during the early stages of 50S assembly. This chain is Large ribosomal subunit protein uL13, found in Treponema denticola (strain ATCC 35405 / DSM 14222 / CIP 103919 / JCM 8153 / KCTC 15104).